A 283-amino-acid polypeptide reads, in one-letter code: Urease accessory protein UreD (283 aa).

Belongs to the UreD family. As to quaternary structure, ureD, UreF and UreG form a complex that acts as a GTP-hydrolysis-dependent molecular chaperone, activating the urease apoprotein by helping to assemble the nickel containing metallocenter of UreC. The UreE protein probably delivers the nickel.

The protein localises to the cytoplasm. In terms of biological role, required for maturation of urease via the functional incorporation of the urease nickel metallocenter. The chain is Urease accessory protein UreD from Rhodopseudomonas palustris (strain BisB5).